Consider the following 946-residue polypeptide: Bifunctional glutamine synthetase adenylyltransferase/adenylyl-removing enzyme (946 aa).

Residues 1–440 are adenylyl removase; sequence MKPLSSPLQQ…VFNELIGDDE (440 aa). Positions 449–946 are adenylyl transferase; the sequence is SEQWRELWQD…ASWQKWLVEE (498 aa).

Belongs to the GlnE family. It depends on Mg(2+) as a cofactor.

It catalyses the reaction [glutamine synthetase]-O(4)-(5'-adenylyl)-L-tyrosine + phosphate = [glutamine synthetase]-L-tyrosine + ADP. The enzyme catalyses [glutamine synthetase]-L-tyrosine + ATP = [glutamine synthetase]-O(4)-(5'-adenylyl)-L-tyrosine + diphosphate. In terms of biological role, involved in the regulation of glutamine synthetase GlnA, a key enzyme in the process to assimilate ammonia. When cellular nitrogen levels are high, the C-terminal adenylyl transferase (AT) inactivates GlnA by covalent transfer of an adenylyl group from ATP to specific tyrosine residue of GlnA, thus reducing its activity. Conversely, when nitrogen levels are low, the N-terminal adenylyl removase (AR) activates GlnA by removing the adenylyl group by phosphorolysis, increasing its activity. The regulatory region of GlnE binds the signal transduction protein PII (GlnB) which indicates the nitrogen status of the cell. This Shigella flexneri protein is Bifunctional glutamine synthetase adenylyltransferase/adenylyl-removing enzyme.